The sequence spans 297 residues: Protein phosphatase PTC7 homolog (297 aa).

Residues 1–27 constitute a mitochondrion transit peptide; sequence MLSVLSYGRLVARAVIGGLSQTDSRDY. The PPM-type phosphatase domain maps to 28 to 292; it reads SLVSASFGFG…DDITVLLSIV (265 aa). 3 residues coordinate Mn(2+): D71, G72, and D216.

This sequence belongs to the PP2C family. It depends on Mg(2+) as a cofactor. Mn(2+) is required as a cofactor.

Its subcellular location is the mitochondrion matrix. The catalysed reaction is O-phospho-L-seryl-[protein] + H2O = L-seryl-[protein] + phosphate. The enzyme catalyses O-phospho-L-threonyl-[protein] + H2O = L-threonyl-[protein] + phosphate. Protein phosphatase which positively regulates biosynthesis of the ubiquinone, coenzyme Q. Dephosphorylates the ubiquinone biosynthesis protein coq7 which is likely to lead to its activation. In Danio rerio (Zebrafish), this protein is Protein phosphatase PTC7 homolog (pptc7).